The following is a 326-amino-acid chain: Undecaprenyl-phosphate 4-deoxy-4-formamido-L-arabinose transferase (326 aa).

The next 2 membrane-spanning stretches (helical) occupy residues 235–255 (MLSV…LLLI) and 270–290 (VFML…GMGL).

Belongs to the glycosyltransferase 2 family.

Its subcellular location is the cell inner membrane. The enzyme catalyses UDP-4-deoxy-4-formamido-beta-L-arabinose + di-trans,octa-cis-undecaprenyl phosphate = 4-deoxy-4-formamido-alpha-L-arabinopyranosyl di-trans,octa-cis-undecaprenyl phosphate + UDP. The protein operates within glycolipid biosynthesis; 4-amino-4-deoxy-alpha-L-arabinose undecaprenyl phosphate biosynthesis; 4-amino-4-deoxy-alpha-L-arabinose undecaprenyl phosphate from UDP-4-deoxy-4-formamido-beta-L-arabinose and undecaprenyl phosphate: step 1/2. It functions in the pathway bacterial outer membrane biogenesis; lipopolysaccharide biosynthesis. In terms of biological role, catalyzes the transfer of 4-deoxy-4-formamido-L-arabinose from UDP to undecaprenyl phosphate. The modified arabinose is attached to lipid A and is required for resistance to polymyxin and cationic antimicrobial peptides. This chain is Undecaprenyl-phosphate 4-deoxy-4-formamido-L-arabinose transferase, found in Sodalis glossinidius (strain morsitans).